The primary structure comprises 765 residues: Eukaryotic translation initiation factor 3 subunit B (765 aa).

Residues 1-136 (MKNFLPRTLK…LFVECGSMND (136 aa)) are sufficient for interaction with HCR1 and TIF32. The sufficient for interaction with PIC8 stretch occupies residues 28–261 (RNTQLKRSKI…GVTAWGGPNF (234 aa)). The residue at position 61 (serine 61) is a Phosphoserine. At tyrosine 67 the chain carries Phosphotyrosine. In terms of domain architecture, RRM spans 77–162 (QYIVVNGAPV…HRLFLYTMKD (86 aa)). Serine 671 bears the Phosphoserine mark.

The protein belongs to the eIF-3 subunit B family. Component of the eukaryotic translation initiation factor 3 (eIF-3) complex.

It is found in the cytoplasm. RNA-binding component of the eukaryotic translation initiation factor 3 (eIF-3) complex, which is involved in protein synthesis of a specialized repertoire of mRNAs and, together with other initiation factors, stimulates binding of mRNA and methionyl-tRNAi to the 40S ribosome. The eIF-3 complex specifically targets and initiates translation of a subset of mRNAs involved in cell proliferation. This is Eukaryotic translation initiation factor 3 subunit B from Saccharomyces cerevisiae (strain YJM789) (Baker's yeast).